The sequence spans 324 residues: Rho crystallin (324 aa).

The residue at position 2 (Thr2) is an N-acetylthreonine. 218 to 281 (SVLGSHRDRN…SFTPARIKQN (64 aa)) lines the NADP(+) pocket.

This sequence belongs to the aldo/keto reductase family. As to quaternary structure, monomer.

The sequence is that of Rho crystallin from Rana temporaria (European common frog).